The sequence spans 319 residues: Acetyl-coenzyme A carboxylase carboxyl transferase subunit alpha (319 aa).

The 262-residue stretch at 35–296 folds into the CoA carboxyltransferase C-terminal domain; that stretch reads NLDEEVQRLR…KAQLLADLSD (262 aa).

Belongs to the AccA family. Acetyl-CoA carboxylase is a heterohexamer composed of biotin carboxyl carrier protein (AccB), biotin carboxylase (AccC) and two subunits each of ACCase subunit alpha (AccA) and ACCase subunit beta (AccD).

The protein resides in the cytoplasm. It catalyses the reaction N(6)-carboxybiotinyl-L-lysyl-[protein] + acetyl-CoA = N(6)-biotinyl-L-lysyl-[protein] + malonyl-CoA. Its pathway is lipid metabolism; malonyl-CoA biosynthesis; malonyl-CoA from acetyl-CoA: step 1/1. Its function is as follows. Component of the acetyl coenzyme A carboxylase (ACC) complex. First, biotin carboxylase catalyzes the carboxylation of biotin on its carrier protein (BCCP) and then the CO(2) group is transferred by the carboxyltransferase to acetyl-CoA to form malonyl-CoA. The polypeptide is Acetyl-coenzyme A carboxylase carboxyl transferase subunit alpha (Yersinia enterocolitica serotype O:8 / biotype 1B (strain NCTC 13174 / 8081)).